Consider the following 686-residue polypeptide: DNA ligase 1 (686 aa).

Residues 35 to 39, 84 to 85, and E119 each bind NAD(+); these read DFEYD and SL. The active-site N6-AMP-lysine intermediate is the K121. NAD(+)-binding residues include R142, E177, K293, and K317. Zn(2+)-binding residues include C411, C414, C429, and C434. One can recognise a BRCT domain in the interval 602-686; sequence RVGEQLAGLT…LAEKGAPPLP (85 aa).

Belongs to the NAD-dependent DNA ligase family. LigA subfamily. Mg(2+) is required as a cofactor. The cofactor is Mn(2+).

It carries out the reaction NAD(+) + (deoxyribonucleotide)n-3'-hydroxyl + 5'-phospho-(deoxyribonucleotide)m = (deoxyribonucleotide)n+m + AMP + beta-nicotinamide D-nucleotide.. DNA ligase that catalyzes the formation of phosphodiester linkages between 5'-phosphoryl and 3'-hydroxyl groups in double-stranded DNA using NAD as a coenzyme and as the energy source for the reaction. It is essential for DNA replication and repair of damaged DNA. This is DNA ligase 1 from Deinococcus deserti (strain DSM 17065 / CIP 109153 / LMG 22923 / VCD115).